Reading from the N-terminus, the 231-residue chain is MEKVKLKEIFNNIYELKSDDGLKRIATKSLVPSKRIYGEKLITGEDNLEYRIWNPNRSKLGAAIVNGLKTMPIKKGSKVLYLGVSAGTTPSHVADITENSPVYSVEFAPRIMREFLDVSKDRKNLIPILGDATNPVEYSNVVEEVDVIFEDVAQPKQAEILVNNAKWFLKEGGYGMISIKARSVDVLRNPKEIFEEQKQILIEGGFEIVDEVNIEPFEKDHILFVGIWNKQ.

S-adenosyl-L-methionine-binding positions include 88–89 (TT), 106–107 (EF), 131–132 (DA), and 151–154 (DVAQ).

The protein belongs to the methyltransferase superfamily. Fibrillarin family. In terms of assembly, interacts with nop5. Component of box C/D small ribonucleoprotein (sRNP) particles that contain rpl7ae, FlpA and nop5, plus a guide RNA.

In terms of biological role, involved in pre-rRNA and tRNA processing. Utilizes the methyl donor S-adenosyl-L-methionine to catalyze the site-specific 2'-hydroxyl methylation of ribose moieties in rRNA and tRNA. Site specificity is provided by a guide RNA that base pairs with the substrate. Methylation occurs at a characteristic distance from the sequence involved in base pairing with the guide RNA. The protein is Fibrillarin-like rRNA/tRNA 2'-O-methyltransferase of Methanococcus aeolicus (strain ATCC BAA-1280 / DSM 17508 / OCM 812 / Nankai-3).